An 85-amino-acid chain; its full sequence is ATP synthase subunit c (85 aa).

2 helical membrane passes run 10–30 (IAVA…FAVL) and 53–73 (FIIA…ALLF).

Belongs to the ATPase C chain family. As to quaternary structure, F-type ATPases have 2 components, F(1) - the catalytic core - and F(0) - the membrane proton channel. F(1) has five subunits: alpha(3), beta(3), gamma(1), delta(1), epsilon(1). F(0) has three main subunits: a(1), b(2) and c(10-14). The alpha and beta chains form an alternating ring which encloses part of the gamma chain. F(1) is attached to F(0) by a central stalk formed by the gamma and epsilon chains, while a peripheral stalk is formed by the delta and b chains.

The protein resides in the cell inner membrane. Its function is as follows. F(1)F(0) ATP synthase produces ATP from ADP in the presence of a proton or sodium gradient. F-type ATPases consist of two structural domains, F(1) containing the extramembraneous catalytic core and F(0) containing the membrane proton channel, linked together by a central stalk and a peripheral stalk. During catalysis, ATP synthesis in the catalytic domain of F(1) is coupled via a rotary mechanism of the central stalk subunits to proton translocation. Key component of the F(0) channel; it plays a direct role in translocation across the membrane. A homomeric c-ring of between 10-14 subunits forms the central stalk rotor element with the F(1) delta and epsilon subunits. The chain is ATP synthase subunit c from Vibrio cholerae serotype O1 (strain ATCC 39315 / El Tor Inaba N16961).